A 170-amino-acid chain; its full sequence is MLRTTRLWTTRMPTVSKLFLRNSSGNALNKNKLPFLYSSQGPQAVRYTSQHEWIAVHQDKTAFVGITKYATDALGDATYVELPEVGTEIAQGESLGSIESVKSASEIYQPADGTVEEINTNLEENPGVVNEDPMGDGWLVKMKLGEGVNVEQVEGLMSLEQYEKTLVHDD.

The transit peptide at 1 to 47 (MLRTTRLWTTRMPTVSKLFLRNSSGNALNKNKLPFLYSSQGPQAVRY) directs the protein to the mitochondrion. Positions 61–143 (TAFVGITKYA…MGDGWLVKMK (83 aa)) constitute a Lipoyl-binding domain. Lys102 carries the N6-lipoyllysine modification.

The protein belongs to the GcvH family. As to quaternary structure, component of the glycine decarboxylase complex (GDC), which is composed of four proteins: P, T, L and H. Requires (R)-lipoate as cofactor.

The protein localises to the mitochondrion. In terms of biological role, the glycine cleavage system (glycine decarboxylase complex) catalyzes the degradation of glycine. The H protein shuttles the methylamine group of glycine from the P protein to the T protein. In Saccharomyces cerevisiae (strain ATCC 204508 / S288c) (Baker's yeast), this protein is Glycine cleavage system H protein, mitochondrial (GCV3).